The sequence spans 819 residues: LPS-assembly protein LptD (819 aa).

Residues 1 to 33 (MRQMKYQFKFNPLAAAIFTLLCGGSMQSSYADA) form the signal peptide.

The protein belongs to the LptD family. As to quaternary structure, component of the lipopolysaccharide transport and assembly complex. Interacts with LptE and LptA.

It localises to the cell outer membrane. Together with LptE, is involved in the assembly of lipopolysaccharide (LPS) at the surface of the outer membrane. The chain is LPS-assembly protein LptD from Acinetobacter baylyi (strain ATCC 33305 / BD413 / ADP1).